The following is a 114-amino-acid chain: UPF0145 protein PYRAB04900 (114 aa).

Belongs to the UPF0145 family.

This chain is UPF0145 protein PYRAB04900, found in Pyrococcus abyssi (strain GE5 / Orsay).